The primary structure comprises 133 residues: MSAATDEILEKLKSLTLLEASELVKQIEEAFGVSAAAPSGGMMMMAPGAAAPGAAAAEPEEEKTEFDVILEEVPGDKKIAILKVVRGITGLGLKEAKDMVESTPKPIKEGTGKEDAEDIKKKLEEAGAKVSVK.

Residues 98 to 118 (DMVESTPKPIKEGTGKEDAED) form a disordered region.

This sequence belongs to the bacterial ribosomal protein bL12 family. In terms of assembly, homodimer. Part of the ribosomal stalk of the 50S ribosomal subunit. Forms a multimeric L10(L12)X complex, where L10 forms an elongated spine to which 2 to 4 L12 dimers bind in a sequential fashion. Binds GTP-bound translation factors.

Its function is as follows. Forms part of the ribosomal stalk which helps the ribosome interact with GTP-bound translation factors. Is thus essential for accurate translation. This chain is Large ribosomal subunit protein bL12, found in Crocosphaera subtropica (strain ATCC 51142 / BH68) (Cyanothece sp. (strain ATCC 51142)).